The following is a 574-amino-acid chain: Efflux pump FUB11 (574 aa).

A disordered region spans residues 1 to 44 (MAIDPQPSSPSLSSETIANDTIGNDNNVNEPSVEPKTQEHQHTV). A compositionally biased stretch (polar residues) spans 9–30 (SPSLSSETIANDTIGNDNNVNE). Asparagine 19 carries an N-linked (GlcNAc...) asparagine glycan. 11 helical membrane-spanning segments follow: residues 116–136 (VATL…LIWA), 148–168 (FFFT…AGSI), 176–196 (FLTG…IADM), 208–228 (MFSG…GFLG), 235–255 (WLHG…TVFI), 318–338 (IYIS…PIVF), 348–368 (IGGL…ISFA), 394–414 (AIMG…TTFA), 419–439 (IVPI…FMAL), 449–469 (IFAA…GAAF), and 484–504 (WASS…FLFY). The interval 552–574 (HNSHTSATHSHGHRRSLSCTRSV) is disordered.

This sequence belongs to the major facilitator superfamily. DHA1 family. Polyamines/proton antiporter (TC 2.A.1.2.16) subfamily.

It localises to the cell membrane. In terms of biological role, efflux pump involved in export of fusaric acid, a mycotoxin with low to moderate toxicity to animals and humans, but with high phytotoxic properties. Constitutes a self-protecting mechanism of the fungus against critical levels of fusaric acid within the cell. This is Efflux pump FUB11 from Gibberella fujikuroi (strain CBS 195.34 / IMI 58289 / NRRL A-6831) (Bakanae and foot rot disease fungus).